The chain runs to 357 residues: Glutamate 5-kinase (357 aa).

Residue lysine 7 coordinates ATP. 3 residues coordinate substrate: serine 43, aspartate 130, and asparagine 142. 162–163 (TD) is a binding site for ATP. The region spanning 270–347 (QGELTLDAGA…PAAGPSPVVV (78 aa)) is the PUA domain.

It belongs to the glutamate 5-kinase family.

The protein resides in the cytoplasm. The enzyme catalyses L-glutamate + ATP = L-glutamyl 5-phosphate + ADP. It participates in amino-acid biosynthesis; L-proline biosynthesis; L-glutamate 5-semialdehyde from L-glutamate: step 1/2. Its function is as follows. Catalyzes the transfer of a phosphate group to glutamate to form L-glutamate 5-phosphate. In Parasynechococcus marenigrum (strain WH8102), this protein is Glutamate 5-kinase.